The following is a 160-amino-acid chain: SsrA-binding protein (160 aa).

Residues 136 to 160 are disordered; the sequence is KRHVEKERDANREVQRAMRSKGKDD.

It belongs to the SmpB family.

It is found in the cytoplasm. Its function is as follows. Required for rescue of stalled ribosomes mediated by trans-translation. Binds to transfer-messenger RNA (tmRNA), required for stable association of tmRNA with ribosomes. tmRNA and SmpB together mimic tRNA shape, replacing the anticodon stem-loop with SmpB. tmRNA is encoded by the ssrA gene; the 2 termini fold to resemble tRNA(Ala) and it encodes a 'tag peptide', a short internal open reading frame. During trans-translation Ala-aminoacylated tmRNA acts like a tRNA, entering the A-site of stalled ribosomes, displacing the stalled mRNA. The ribosome then switches to translate the ORF on the tmRNA; the nascent peptide is terminated with the 'tag peptide' encoded by the tmRNA and targeted for degradation. The ribosome is freed to recommence translation, which seems to be the essential function of trans-translation. In Ectopseudomonas mendocina (strain ymp) (Pseudomonas mendocina), this protein is SsrA-binding protein.